Reading from the N-terminus, the 196-residue chain is NADH-quinone oxidoreductase subunit B (196 aa).

The [4Fe-4S] cluster site is built by Cys-75, Cys-76, Cys-140, and Cys-170.

The protein belongs to the complex I 20 kDa subunit family. NDH-1 is composed of 14 different subunits. Subunits NuoB, C, D, E, F, and G constitute the peripheral sector of the complex. Requires [4Fe-4S] cluster as cofactor.

Its subcellular location is the cell inner membrane. The catalysed reaction is a quinone + NADH + 5 H(+)(in) = a quinol + NAD(+) + 4 H(+)(out). In terms of biological role, NDH-1 shuttles electrons from NADH, via FMN and iron-sulfur (Fe-S) centers, to quinones in the respiratory chain. Couples the redox reaction to proton translocation (for every two electrons transferred, four hydrogen ions are translocated across the cytoplasmic membrane), and thus conserves the redox energy in a proton gradient. The chain is NADH-quinone oxidoreductase subunit B from Caulobacter sp. (strain K31).